A 493-amino-acid chain; its full sequence is MNNFVILPILIPLLSAILLIFMTKNLMLMRIFSTAASAIGIVISGILVQTVFTKGIQTLSLGGWKAPYGIVLAADQFASLLVLTTAIIGLLVGLYSFRSVGEKRERSFYYSGVQFLLAGVSGAFLTGDLFNMYVFFELLLIASYMLIVLGGTKIQLRESLKYIVFNIVSSALFVIGVGFLYAVTGTLNMADLSVKISESGQTGLITVIGVLLLLVFGMKGGIFPLYFWLPGSYYAPPAAISALFGALLTKVGLYAITRVFTLIFIHDTAFTHQLMIWLAALTVIFGVIGSLAYSNVMKIVIYNIITAVGVILFGVAVHTPASIQGAIYYLIHDMLIKGALFMLAGTLIALTGTASLHKMGGLIKRYPVLGWMFFISAISLAGIPPLSGFVGKFKIAEGGFAEGEFTISMLILLSSLLVLYSVLRIFIHAFWGEEKETPKPNHRTAKGLLYPAAIFLLLSLLFGLGTEWVSPYVDQAAETLLNPEKYIEAVLKE.

Helical transmembrane passes span 3-23 (NFVILPILIPLLSAILLIFMT), 31-51 (IFSTAASAIGIVISGILVQTV), 77-97 (FASLLVLTTAIIGLLVGLYSF), 107-127 (SFYYSGVQFLLAGVSGAFLTG), 129-149 (LFNMYVFFELLLIASYMLIVL), 163-183 (IVFNIVSSALFVIGVGFLYAV), 203-223 (GLITVIGVLLLLVFGMKGGIF), 227-247 (FWLPGSYYAPPAAISALFGAL), 251-271 (VGLYAITRVFTLIFIHDTAFT), 274-294 (LMIWLAALTVIFGVIGSLAYS), 299-319 (IVIYNIITAVGVILFGVAVHT), 330-350 (LIHDMLIKGALFMLAGTLIAL), 370-390 (GWMFFISAISLAGIPPLSGFV), 407-427 (ISMLILLSSLLVLYSVLRIFI), and 449-469 (LYPAAIFLLLSLLFGLGTEWV).

It belongs to the CPA3 antiporters (TC 2.A.63) subunit D family. As to quaternary structure, forms a heterooligomeric complex that consists of seven subunits: MrpA, MrpB, MrpC, MrpD, MrpE, MrpF and MrpG.

The protein resides in the cell membrane. Mrp complex is a Na(+)/H(+) antiporter that is considered to be the major Na(+) excretion system in B.subtilis. Has a major role in Na(+) resistance and a minor role in Na(+)- and K(+)-dependent pH homeostasis as compared to TetB. MrpA may be the actual Na(+)/H(+) antiporter, although the six other Mrp proteins are all required for Na(+)/H(+) antiport activity and Na(+) resistance. MrpA is required for initiation of sporulation when external Na(+) concentration increases. Also transports Li(+) but not K(+), Ca(2+) or Mg(2+). This is Na(+)/H(+) antiporter subunit D (mrpD) from Bacillus subtilis (strain 168).